A 310-amino-acid polypeptide reads, in one-letter code: Glutaminase (310 aa).

Ser-66, Asn-117, Glu-161, Asn-168, Tyr-192, Tyr-244, and Val-262 together coordinate substrate. At Lys-294 the chain carries N6-acetyllysine.

Belongs to the glutaminase family. Homotetramer.

The enzyme catalyses L-glutamine + H2O = L-glutamate + NH4(+). In Escherichia coli O81 (strain ED1a), this protein is Glutaminase.